Here is a 246-residue protein sequence, read N- to C-terminus: tRNA pseudouridine synthase A (246 aa).

Aspartate 53 functions as the Nucleophile in the catalytic mechanism. Residue tyrosine 111 participates in substrate binding.

Belongs to the tRNA pseudouridine synthase TruA family. Homodimer.

The catalysed reaction is uridine(38/39/40) in tRNA = pseudouridine(38/39/40) in tRNA. Its function is as follows. Formation of pseudouridine at positions 38, 39 and 40 in the anticodon stem and loop of transfer RNAs. The chain is tRNA pseudouridine synthase A from Anoxybacillus flavithermus (strain DSM 21510 / WK1).